The following is a 477-amino-acid chain: MMITQDFTKPIDSATVLQKIVLDKAQWVKAKEKEFPLSQFKQNIQNSDRSFYDALAKGTHQKPAYILECKKASPSKGLIRAEFNLEEIANVYKHYASAVSVLTDEKYFQGNFEFLPLVRDIVSQPVLCKDFMISEYQVYLARYYQVDAILLMLSVVNDETYRVLADLAHSLGMGVLTETSNEEEFERALALGAKIIGVNNRNLHDLTVDLNRVVELTKKYADCIPADVRIISESGIYNHKQIHQLQKVAHGFLIGSSLMGNQDLNNAVRSVIFGENKVCGLTRAQDVKIVYENGALYGGLIFAEHSKRSVSLRQAQELVTAAPLRFVGVFQNQEIDFIVKIASQLQLYAVQLHGAETEAFITALRQQLPKNTQIWKAISVNTEAQSAVDFTDDLNVDRYIFDSQTANQQGGTGKTFDWSLIPENLKHKIILAGGISPNNVEQAIAQGCLGLDLNSGVESSAGVKDQEKVRLVFNNIY.

Residues 13 to 275 form an indole-3-glycerol phosphate synthase region; it reads SATVLQKIVL…NAVRSVIFGE (263 aa). Residues 276-477 are N-(5'-phosphoribosyl)anthranilate isomerase; it reads NKVCGLTRAQ…KVRLVFNNIY (202 aa).

The protein in the N-terminal section; belongs to the TrpC family. In the C-terminal section; belongs to the TrpF family. Monomer.

The catalysed reaction is N-(5-phospho-beta-D-ribosyl)anthranilate = 1-(2-carboxyphenylamino)-1-deoxy-D-ribulose 5-phosphate. The enzyme catalyses 1-(2-carboxyphenylamino)-1-deoxy-D-ribulose 5-phosphate + H(+) = (1S,2R)-1-C-(indol-3-yl)glycerol 3-phosphate + CO2 + H2O. It participates in amino-acid biosynthesis; L-tryptophan biosynthesis; L-tryptophan from chorismate: step 3/5. It functions in the pathway amino-acid biosynthesis; L-tryptophan biosynthesis; L-tryptophan from chorismate: step 4/5. Bifunctional enzyme that catalyzes two sequential steps of tryptophan biosynthetic pathway. The first reaction is catalyzed by the isomerase, coded by the TrpF domain; the second reaction is catalyzed by the synthase, coded by the TrpC domain. The sequence is that of Tryptophan biosynthesis protein TrpCF (trpC) from Haemophilus influenzae (strain ATCC 51907 / DSM 11121 / KW20 / Rd).